An 82-amino-acid chain; its full sequence is APECGERASGKRCPNGKCCSQWGYCGTTDNYCGQGCQSQCDYWRCGRDFGGRLCEEDMCCSKYGWCGYSDDHCEDGCQSQCD.

Chitin-binding type-1 domains follow at residues 1 to 42 and 43 to 82; these read APEC…QCDY and WRCG…SQCD. Disulfide bonds link Cys-4/Cys-19, Cys-13/Cys-25, Cys-18/Cys-32, and Cys-36/Cys-40. Residues Ser-20, Trp-22, Tyr-24, and Tyr-31 each coordinate a carbohydrate. A carbohydrate is bound at residue Trp-43. 4 disulfides stabilise this stretch: Cys-45/Cys-60, Cys-54/Cys-66, Cys-59/Cys-73, and Cys-77/Cys-81. A carbohydrate is bound by residues Ser-61, Tyr-63, Trp-65, and His-72.

In terms of assembly, monomer.

In terms of biological role, N-acetyl-D-glucosamine binding lectin. Shows no hemagglutinating activity towards rabbit erythrocytes and weak activity towards trypsin-treated erythrocytes. Has mitogenic activity towards human peripheral blood lymphocytes (HPBL). This Phytolacca americana (American pokeweed) protein is Lectin-D2.